The primary structure comprises 104 residues: L-rhamnose mutarotase (104 aa).

A substrate-binding site is contributed by Tyr18. The Proton donor role is filled by His22. Substrate is bound by residues Tyr41 and 76 to 77; that span reads WW.

The protein belongs to the rhamnose mutarotase family. Homodimer.

The protein localises to the cytoplasm. The enzyme catalyses alpha-L-rhamnose = beta-L-rhamnose. It participates in carbohydrate metabolism; L-rhamnose metabolism. In terms of biological role, involved in the anomeric conversion of L-rhamnose. The sequence is that of L-rhamnose mutarotase from Pectobacterium carotovorum subsp. carotovorum (strain PC1).